The sequence spans 1053 residues: Middle cell wall protein (1053 aa).

The first 23 residues, 1–23 (MKKVVNSVLASALALTVAPMAFA), serve as a signal peptide directing secretion. SLH domains lie at 26–89 (EAAT…KLAQ), 90–153 (FSNT…KGVW), and 154–203 (PNSM…FGTD).

As to quaternary structure, the middle cell wall layer is composed of subunits of the middle cell wall protein. These proteins form a hexagonal array with a lattice constant of 14.5 nM in the middle cell wall layers.

The protein localises to the secreted. Its subcellular location is the cell wall. The protein resides in the S-layer. Its function is as follows. The middle wall protein binds to peptidoglycan and to the outer cell wall protein. The chain is Middle cell wall protein from Brevibacillus brevis (strain 47 / JCM 6285 / NBRC 100599).